The following is a 168-amino-acid chain: Large ribosomal subunit protein uL10 (168 aa).

Belongs to the universal ribosomal protein uL10 family. Part of the ribosomal stalk of the 50S ribosomal subunit. The N-terminus interacts with L11 and the large rRNA to form the base of the stalk. The C-terminus forms an elongated spine to which L12 dimers bind in a sequential fashion forming a multimeric L10(L12)X complex.

Functionally, forms part of the ribosomal stalk, playing a central role in the interaction of the ribosome with GTP-bound translation factors. In Acinetobacter baylyi (strain ATCC 33305 / BD413 / ADP1), this protein is Large ribosomal subunit protein uL10.